The sequence spans 269 residues: uncharacterized protein (269 aa).

Residues 1-21 (MAYSSSNSDIEDDSSKSNSNL) are disordered.

This is an uncharacterized protein from Homo sapiens (Human).